We begin with the raw amino-acid sequence, 238 residues long: Large ribosomal subunit protein uL5c (238 aa).

This sequence belongs to the universal ribosomal protein uL5 family. Part of the 50S ribosomal subunit; contacts the 5S rRNA.

It localises to the plastid. The protein resides in the chloroplast. Its function is as follows. Binds 5S rRNA, forms part of the central protuberance of the 50S subunit. This is Large ribosomal subunit protein uL5c (rpl5) from Phaeodactylum tricornutum (strain CCAP 1055/1).